A 169-amino-acid chain; its full sequence is Cell division inhibitor SulA (169 aa).

The tract at residues 106–112 is ftsZ binding; sequence ALRTGNY. Positions 162 to 169 are lon protease binding; it reads KIHSNLYH.

The protein belongs to the SulA family. In terms of assembly, interacts with FtsZ. Is rapidly cleaved and degraded by the Lon protease once DNA damage is repaired.

In terms of biological role, component of the SOS system and an inhibitor of cell division. Accumulation of SulA causes rapid cessation of cell division and the appearance of long, non-septate filaments. In the presence of GTP, binds a polymerization-competent form of FtsZ in a 1:1 ratio, thus inhibiting FtsZ polymerization and therefore preventing it from participating in the assembly of the Z ring. This mechanism prevents the premature segregation of damaged DNA to daughter cells during cell division. The chain is Cell division inhibitor SulA from Shigella boydii serotype 18 (strain CDC 3083-94 / BS512).